The primary structure comprises 570 residues: Grayanic acid biosynthesis cluster cytochrome P450 monooxygenase (570 aa).

A helical membrane pass occupies residues 9–29 (ILTIFWLPIAAAXLYGAGLAI). An N-linked (GlcNAc...) asparagine glycan is attached at Asn191. Cys510 provides a ligand contact to heme.

Belongs to the cytochrome P450 family. Heme serves as cofactor.

It localises to the membrane. Its pathway is secondary metabolite biosynthesis. Non-reducing polyketide synthase; part of the gene cluster that mediates the biosynthesis of orcinol depsidone grayanic acid (GRA), the only major secondary metabolite known in C.grayi. The first step consists in the ring and depside synthesis by PKS16 leading to 4-O-demethylsphaerophorin, involving different orcinol-like rings, one with acetyl CoA and the other with octanoyl CoA as the starter. Further depsidone formation by the GRA cluster-specific cytochrome P450 leads to 4-O-demethylgrayanic acid. Finally, the cluster specific O-methyltransferase probably converts the 4-O-demethylgrayanic acid into grayanic acid. In Cladonia grayi (Gray's cup lichen), this protein is Grayanic acid biosynthesis cluster cytochrome P450 monooxygenase.